A 27-amino-acid chain; its full sequence is Snake venom serine protease Afaacytin alpha/beta/beta' chains (27 aa).

Residues 1 to 27 enclose the Peptidase S1 domain; sequence VIGGAECNINEHRSLVLLYXSSSXFGE.

The protein belongs to the peptidase S1 family. Snake venom subfamily. Heterodimer of an alpha and a beta chain. Subunit beta is constituted of two disulfide-linked polypeptidic chains, beta and beta'. Calcium appears to be required for structural cohesion of the molecule. Both chains alpha and beta are N-glycosylated. In terms of tissue distribution, expressed by the venom gland.

It localises to the secreted. Its activity is regulated as follows. Inhibited by diisopropylfluorophosphate (DFP), benzamidine, heparin and hirudin, but not by plasmatic thrombin inhibitors, antithrombin-III and ecotin. Functionally, snake venom serine protease that exhibits alpha-fibrinase and beta-fibrinogenase activities. It replaces missing factors VIII (F8) and IX (F9) in deficient plasmas by activating purified human factor X (F10) into factor Xa. It releases serotonin from platelets and induces platelet aggregation in human (but not in rabbit). Has caseinolytic, arginine-esterase and amidase activities. In Cerastes cerastes (Horned desert viper), this protein is Snake venom serine protease Afaacytin alpha/beta/beta' chains.